A 165-amino-acid chain; its full sequence is MTQTSENVTWLTQEAYNQLKAELEYLSGPARTEIAAKIAAAREEGDLRENGGYHAAKEEQGKQELRVRQLTQLLENAKVGEAPAADGAVAPGMVVTIAFDGDEDDTLDFLLASREYASADIETYSPQSPLGSGVNGKKVGEDAQYELPNGKLASVKILKAEPYQG.

A coiled-coil region spans residues 55–78 (AAKEEQGKQELRVRQLTQLLENAK).

Belongs to the GreA/GreB family.

Its function is as follows. Necessary for efficient RNA polymerase transcription elongation past template-encoded arresting sites. The arresting sites in DNA have the property of trapping a certain fraction of elongating RNA polymerases that pass through, resulting in locked ternary complexes. Cleavage of the nascent transcript by cleavage factors such as GreA or GreB allows the resumption of elongation from the new 3'terminus. GreA releases sequences of 2 to 3 nucleotides. The protein is Transcription elongation factor GreA of Streptomyces avermitilis (strain ATCC 31267 / DSM 46492 / JCM 5070 / NBRC 14893 / NCIMB 12804 / NRRL 8165 / MA-4680).